The primary structure comprises 275 residues: Translation initiation factor 2 subunit alpha (275 aa).

The region spanning glycine 12 to lysine 83 is the S1 motif domain.

Belongs to the eIF-2-alpha family. As to quaternary structure, heterotrimer composed of an alpha, a beta and a gamma chain.

In terms of biological role, eIF-2 functions in the early steps of protein synthesis by forming a ternary complex with GTP and initiator tRNA. The polypeptide is Translation initiation factor 2 subunit alpha (Thermococcus onnurineus (strain NA1)).